The primary structure comprises 107 residues: MNKIIKGDRVVVIAGKDKGKQGQVVRVLGDKVVVEGVNVVKRHQKPNPMRGIEGGIITKEMPLDISNIAILNPETNKADRVGIKLIENEGKVKRVRFFKSNGSIIGA.

This sequence belongs to the universal ribosomal protein uL24 family. Part of the 50S ribosomal subunit.

One of two assembly initiator proteins, it binds directly to the 5'-end of the 23S rRNA, where it nucleates assembly of the 50S subunit. In terms of biological role, one of the proteins that surrounds the polypeptide exit tunnel on the outside of the subunit. This is Large ribosomal subunit protein uL24 from Neisseria meningitidis serogroup C (strain 053442).